A 173-amino-acid polypeptide reads, in one-letter code: uncharacterized protein (173 aa).

Residues 1 to 20 form the signal peptide; it reads MWYKVLGIVSLCSVYVSTQG. An N-linked (GlcNAc...) asparagine glycan is attached at N53.

Component of the acid-insoluble organic matrix of calcified shell layers (at protein level).

It localises to the secreted. This is an uncharacterized protein from Haliotis asinina (Donkey's ear abalone).